A 298-amino-acid chain; its full sequence is UDP-N-acetylenolpyruvoylglucosamine reductase (298 aa).

Residues 27 to 191 form the FAD-binding PCMH-type domain; that stretch reads TGGNADVFVM…LDATFSLELE (165 aa). The active site involves arginine 170. The Proton donor role is filled by serine 220. Glutamate 290 is an active-site residue.

It belongs to the MurB family. The cofactor is FAD.

Its subcellular location is the cytoplasm. The enzyme catalyses UDP-N-acetyl-alpha-D-muramate + NADP(+) = UDP-N-acetyl-3-O-(1-carboxyvinyl)-alpha-D-glucosamine + NADPH + H(+). The protein operates within cell wall biogenesis; peptidoglycan biosynthesis. In terms of biological role, cell wall formation. This Listeria innocua serovar 6a (strain ATCC BAA-680 / CLIP 11262) protein is UDP-N-acetylenolpyruvoylglucosamine reductase.